Here is a 248-residue protein sequence, read N- to C-terminus: Triosephosphate isomerase (248 aa).

9-11 (NWK) provides a ligand contact to substrate. His94 (electrophile) is an active-site residue. The Proton acceptor role is filled by Glu166. Substrate-binding positions include Gly172, Ser212, and 233 to 234 (GG).

Belongs to the triosephosphate isomerase family. Homodimer.

It is found in the cytoplasm. It catalyses the reaction D-glyceraldehyde 3-phosphate = dihydroxyacetone phosphate. It participates in carbohydrate biosynthesis; gluconeogenesis. The protein operates within carbohydrate degradation; glycolysis; D-glyceraldehyde 3-phosphate from glycerone phosphate: step 1/1. In terms of biological role, involved in the gluconeogenesis. Catalyzes stereospecifically the conversion of dihydroxyacetone phosphate (DHAP) to D-glyceraldehyde-3-phosphate (G3P). The polypeptide is Triosephosphate isomerase (Clostridium botulinum (strain Loch Maree / Type A3)).